The chain runs to 246 residues: Apolipoprotein L domain-containing protein 1 (246 aa).

2 helical membrane-spanning segments follow: residues serine 50–leucine 72 and glycine 89–phenylalanine 109. Positions leucine 193–serine 220 form a coiled coil.

This sequence belongs to the apolipoprotein L family. As to expression, present at low levels in brain vascular cells (at protein level).

Its subcellular location is the cell membrane. The protein resides in the cell junction. It localises to the cytoplasmic vesicle. It is found in the secretory vesicle. Its function is as follows. Is a modulator of endothelial barrier permeability, required for proper organization of endothelial cell-cell junctions and cytoskeleton. It also plays a role in the modulation of secretory autophagy. May affect blood-brain barrier permeability. The polypeptide is Apolipoprotein L domain-containing protein 1 (Apold1) (Rattus norvegicus (Rat)).